Reading from the N-terminus, the 1161-residue chain is Auxin response factor 19 (1161 aa).

The interval 1-20 (MMKQAQQQPPPPPASSAATT) is disordered. The segment at residues 154-256 (FCKTLTASDT…QLLLGIRRAN (103 aa)) is a DNA-binding region (TF-B3). The interval 573-598 (NQMQQQHASSTQGQQPATSQPLLLPQ) is disordered. Residues 1027–1111 (RTFTKVYKRG…KCIRILSPQE (85 aa)) form the PB1 domain.

This sequence belongs to the ARF family. In terms of assembly, homodimers and heterodimers. In terms of tissue distribution, expressed in roots, culms, leaves and young panicles.

The protein localises to the nucleus. Functionally, auxin response factors (ARFs) are transcriptional factors that bind specifically to the DNA sequence 5'-TGTCTC-3' found in the auxin-responsive promoter elements (AuxREs). The protein is Auxin response factor 19 (ARF19) of Oryza sativa subsp. japonica (Rice).